A 145-amino-acid polypeptide reads, in one-letter code: Probable thioredoxin-2 (145 aa).

Residues 39–144 enclose the Thioredoxin domain; that stretch reads VFDIDSVEDF…LDDFIEDVLA (106 aa). Catalysis depends on nucleophile residues cysteine 68 and cysteine 71. Residues cysteine 68 and cysteine 71 are joined by a disulfide bond.

The protein belongs to the thioredoxin family.

In terms of biological role, participates in various redox reactions through the reversible oxidation of its active center dithiol to a disulfide and catalyzes dithiol-disulfide exchange reactions. This is Probable thioredoxin-2 (trx-2) from Caenorhabditis elegans.